A 231-amino-acid polypeptide reads, in one-letter code: Small ribosomal subunit protein uS3 (231 aa).

The 69-residue stretch at 39–107 folds into the KH type-2 domain; that stretch reads IRKYIVENLP…DVKLNIVEIR (69 aa).

It belongs to the universal ribosomal protein uS3 family. In terms of assembly, part of the 30S ribosomal subunit. Forms a tight complex with proteins S10 and S14.

In terms of biological role, binds the lower part of the 30S subunit head. Binds mRNA in the 70S ribosome, positioning it for translation. This is Small ribosomal subunit protein uS3 from Novosphingobium aromaticivorans (strain ATCC 700278 / DSM 12444 / CCUG 56034 / CIP 105152 / NBRC 16084 / F199).